Here is a 133-residue protein sequence, read N- to C-terminus: MSCRLLLYVSLCLVETALMNTKITQSPRYLILGRANKSLECEQHLGHNAMYWYKQSAEKPPELMFLYNLKQLIRNETVPSRFIPECPDSSKLLLHISAVDPEDSAVYFCASSHGQGVSGNTLYFGEGSRLIVV.

The first 21 residues, 1 to 21 (MSCRLLLYVSLCLVETALMNT), serve as a signal peptide directing secretion. A v segment region spans residues 22 to 113 (KITQSPRYLI…SAVYFCASSH (92 aa)). N-linked (GlcNAc...) asparagine glycans are attached at residues N36 and N75. Cysteines 41 and 109 form a disulfide. Residues 114–133 (GQGVSGNTLYFGEGSRLIVV) are j segment.

This Mus musculus (Mouse) protein is T-cell receptor beta chain V region 86T1.